A 335-amino-acid chain; its full sequence is Galactosylgalactosylxylosylprotein 3-beta-glucuronosyltransferase 3 (335 aa).

Topologically, residues 1-7 (MKLKLKN) are cytoplasmic. Residues 8 to 28 (VFLAYFLVSIAGLLYALVQLG) traverse the membrane as a helical; Signal-anchor for type II membrane protein segment. At 29–335 (QPCDCLPPLR…GQGSDPAIEV (307 aa)) the chain is on the lumenal side. D196 serves as a coordination point for Mn(2+). The Proton acceptor role is filled by E281. Residue N300 is glycosylated (N-linked (GlcNAc...) asparagine). Residues 312-322 (EKPKMKQEEQL) show a composition bias toward basic and acidic residues. The disordered stretch occupies residues 312 to 335 (EKPKMKQEEQLQRQGQGSDPAIEV).

The protein belongs to the glycosyltransferase 43 family. As to quaternary structure, homodimer; disulfide-linked. Interacts with PXYLP1; the interaction increases the 2-phosphoxylose phosphatase activity of PXYLP1 during completion of linkage region formation in a B3GAT3-mediated manner. Mn(2+) serves as cofactor. N-glycosylated. Liver, brain and heart. Moderate expression seen in lung, skeletal muscle, kidney and testis.

The protein resides in the golgi apparatus membrane. The protein localises to the golgi apparatus. It localises to the cis-Golgi network. The enzyme catalyses 3-O-(beta-D-galactosyl-(1-&gt;3)-beta-D-galactosyl-(1-&gt;4)-beta-D-xylosyl)-L-seryl-[protein] + UDP-alpha-D-glucuronate = 3-O-(beta-D-GlcA-(1-&gt;3)-beta-D-Gal-(1-&gt;3)-beta-D-Gal-(1-&gt;4)-beta-D-Xyl)-L-seryl-[protein] + UDP + H(+). It functions in the pathway protein modification; protein glycosylation. Functionally, glycosaminoglycans biosynthesis. Involved in forming the linkage tetrasaccharide present in heparan sulfate and chondroitin sulfate. Transfers a glucuronic acid moiety from the uridine diphosphate-glucuronic acid (UDP-GlcUA) to the common linkage region trisaccharide Gal-beta-1,3-Gal-beta-1,4-Xyl covalently bound to a Ser residue at the glycosaminylglycan attachment site of proteoglycans. Can also play a role in the biosynthesis of l2/HNK-1 carbohydrate epitope on glycoproteins. Highest activity seen with Gal-beta-1,3-Gal-beta-O-R (where R=naphthalenemethanol or benzyl alcohol). Stimulates 2-phosphoxylose phosphatase activity of PXYLP1 in presence of uridine diphosphate-glucuronic acid (UDP-GlcUA) during completion of linkage region formation. The chain is Galactosylgalactosylxylosylprotein 3-beta-glucuronosyltransferase 3 (B3GAT3) from Cricetulus griseus (Chinese hamster).